We begin with the raw amino-acid sequence, 545 residues long: 2-oxo-Delta(3)-4,5,5-trimethylcyclopentenylacetyl-CoA monooxygenase (545 aa).

FAD is bound by residues threonine 20, glutamate 39, 47–50 (TWYW), 59–60 (DT), tyrosine 65, and valine 112. 57–59 (RLD) contacts NADP(+). Residues 193-199 (TGATGVQ) and 216-217 (RT) contribute to the NADP(+) site. Valine 446 is a binding site for FAD. Residue tryptophan 501 coordinates NADP(+).

It belongs to the FAD-binding monooxygenase family. As to quaternary structure, homodimer. FAD serves as cofactor.

The enzyme catalyses [(1R)-2,2,3-trimethyl-5-oxocyclopent-3-enyl]acetyl-CoA + NADPH + O2 + H(+) = [(2R)-3,3,4-trimethyl-6-oxo-3,6-dihydro-1H-pyran-2-yl]acetyl-CoA + NADP(+) + H2O. The protein operates within terpene metabolism; (R)-camphor degradation. Functionally, involved in the degradation of (+)-camphor. Catalyzes the lactonization of 2-oxo-delta(3)-4,5, 5-trimethylcyclopentenylacetyl-CoA (OT-CoA), a key intermediate in the metabolism of camphor. 2-Oxocyclopentyl ethyl acetate is also a good substrate, as is 2-oxocyclohexyl ethyl acetate and methyl-substituted cyclohexanones, but free acid is a poor substrate. The polypeptide is 2-oxo-Delta(3)-4,5,5-trimethylcyclopentenylacetyl-CoA monooxygenase (otemo) (Pseudomonas putida (Arthrobacter siderocapsulatus)).